We begin with the raw amino-acid sequence, 244 residues long: Krueppel-like factor 9 (244 aa).

The segment at 80–142 is disordered; it reads SVCSDSLESP…AKGKHASEKR (63 aa). The residue at position 122 (S122) is a Phosphoserine. 3 consecutive C2H2-type zinc fingers follow at residues 143 to 167, 173 to 197, and 203 to 225; these read HKCP…YRVH, FPCT…YRTH, and FRCP…ARRH.

Belongs to the Sp1 C2H2-type zinc-finger protein family. Interacts with ZZEF1. Epidermis (at protein level).

It localises to the nucleus. Transcription factor that binds to GC box promoter elements. Selectively activates mRNA synthesis from genes containing tandem repeats of GC boxes but represses genes with a single GC box. Acts as an epidermal circadian transcription factor regulating keratinocyte proliferation. The protein is Krueppel-like factor 9 (KLF9) of Homo sapiens (Human).